A 176-amino-acid polypeptide reads, in one-letter code: ATP synthase subunit delta (176 aa).

Belongs to the ATPase delta chain family. In terms of assembly, F-type ATPases have 2 components, F(1) - the catalytic core - and F(0) - the membrane proton channel. F(1) has five subunits: alpha(3), beta(3), gamma(1), delta(1), epsilon(1). F(0) has three main subunits: a(1), b(2) and c(10-14). The alpha and beta chains form an alternating ring which encloses part of the gamma chain. F(1) is attached to F(0) by a central stalk formed by the gamma and epsilon chains, while a peripheral stalk is formed by the delta and b chains.

It is found in the cell inner membrane. Its function is as follows. F(1)F(0) ATP synthase produces ATP from ADP in the presence of a proton or sodium gradient. F-type ATPases consist of two structural domains, F(1) containing the extramembraneous catalytic core and F(0) containing the membrane proton channel, linked together by a central stalk and a peripheral stalk. During catalysis, ATP synthesis in the catalytic domain of F(1) is coupled via a rotary mechanism of the central stalk subunits to proton translocation. Functionally, this protein is part of the stalk that links CF(0) to CF(1). It either transmits conformational changes from CF(0) to CF(1) or is implicated in proton conduction. This is ATP synthase subunit delta from Aliarcobacter butzleri (strain RM4018) (Arcobacter butzleri).